The chain runs to 492 residues: Phosphatidylglycerol--prolipoprotein diacylglyceryl transferase (492 aa).

The next 9 membrane-spanning stretches (helical) occupy residues Ile40–Trp60, Ala72–Pro92, Val106–Ala126, Ala133–Leu153, Gln184–Leu204, Ile214–Leu234, Val361–Ile381, Gly409–Ile429, and Leu441–Ile461. Residue Arg230 participates in a 1,2-diacyl-sn-glycero-3-phospho-(1'-sn-glycerol) binding.

It belongs to the Lgt family.

The protein localises to the cell inner membrane. The catalysed reaction is L-cysteinyl-[prolipoprotein] + a 1,2-diacyl-sn-glycero-3-phospho-(1'-sn-glycerol) = an S-1,2-diacyl-sn-glyceryl-L-cysteinyl-[prolipoprotein] + sn-glycerol 1-phosphate + H(+). The protein operates within protein modification; lipoprotein biosynthesis (diacylglyceryl transfer). In terms of biological role, catalyzes the transfer of the diacylglyceryl group from phosphatidylglycerol to the sulfhydryl group of the N-terminal cysteine of a prolipoprotein, the first step in the formation of mature lipoproteins. The sequence is that of Phosphatidylglycerol--prolipoprotein diacylglyceryl transferase from Rhodopirellula baltica (strain DSM 10527 / NCIMB 13988 / SH1).